We begin with the raw amino-acid sequence, 62 residues long: U10-hottentoxin-Hj3a (62 aa).

The signal sequence occupies residues 1–22 (MQKLLIILILFCILKFNVDVEG). 3 cysteine pairs are disulfide-bonded: Cys-28-Cys-46, Cys-33-Cys-59, and Cys-37-Cys-61.

It belongs to the short scorpion toxin superfamily. Potassium channel inhibitor family. Alpha-KTx 23 subfamily. In terms of tissue distribution, expressed by the venom gland.

It localises to the secreted. May block potassium channels. The protein is U10-hottentoxin-Hj3a of Hottentotta judaicus (Black scorpion).